We begin with the raw amino-acid sequence, 256 residues long: Type III pantothenate kinase 1 (256 aa).

6-13 (DIGNSHIF) is an ATP binding site. Residue 107–110 (GADR) coordinates substrate. The active-site Proton acceptor is the aspartate 109. Residue aspartate 130 coordinates K(+). Threonine 133 provides a ligand contact to ATP. Threonine 185 lines the substrate pocket.

It belongs to the type III pantothenate kinase family. Homodimer. Requires NH4(+) as cofactor. It depends on K(+) as a cofactor.

It localises to the cytoplasm. The catalysed reaction is (R)-pantothenate + ATP = (R)-4'-phosphopantothenate + ADP + H(+). The protein operates within cofactor biosynthesis; coenzyme A biosynthesis; CoA from (R)-pantothenate: step 1/5. Catalyzes the phosphorylation of pantothenate (Pan), the first step in CoA biosynthesis. In Francisella tularensis subsp. holarctica (strain LVS), this protein is Type III pantothenate kinase 1.